The chain runs to 209 residues: Small ribosomal subunit protein uS3 (209 aa).

Residues 17–86 (IDEFLEKELR…NPQIEVEEIK (70 aa)) enclose the KH type-2 domain.

The protein belongs to the universal ribosomal protein uS3 family. In terms of assembly, part of the 30S ribosomal subunit.

In terms of biological role, binds the lower part of the 30S subunit head. The sequence is that of Small ribosomal subunit protein uS3 from Thermococcus kodakarensis (strain ATCC BAA-918 / JCM 12380 / KOD1) (Pyrococcus kodakaraensis (strain KOD1)).